A 297-amino-acid chain; its full sequence is Glycerol-3-phosphate dehydrogenase [NAD(P)+] (297 aa).

NADPH contacts are provided by Trp-11, Arg-33, and Lys-79. Positions 79, 107, and 109 each coordinate sn-glycerol 3-phosphate. Position 111 (Ala-111) interacts with NADPH. 5 residues coordinate sn-glycerol 3-phosphate: Lys-161, Asp-214, Ser-224, Arg-225, and Asn-226. Residue Lys-161 is the Proton acceptor of the active site. Arg-225 is an NADPH binding site. Residues Val-249 and Glu-251 each contribute to the NADPH site.

The protein belongs to the NAD-dependent glycerol-3-phosphate dehydrogenase family.

The protein localises to the cytoplasm. It catalyses the reaction sn-glycerol 3-phosphate + NAD(+) = dihydroxyacetone phosphate + NADH + H(+). The catalysed reaction is sn-glycerol 3-phosphate + NADP(+) = dihydroxyacetone phosphate + NADPH + H(+). It participates in membrane lipid metabolism; glycerophospholipid metabolism. Functionally, catalyzes the reduction of the glycolytic intermediate dihydroxyacetone phosphate (DHAP) to sn-glycerol 3-phosphate (G3P), the key precursor for phospholipid synthesis. This chain is Glycerol-3-phosphate dehydrogenase [NAD(P)+], found in Campylobacter jejuni subsp. doylei (strain ATCC BAA-1458 / RM4099 / 269.97).